The chain runs to 345 residues: Solute carrier family 25 member 43 (345 aa).

3 Solcar repeats span residues 11 to 100 (TSSQ…IDEL), 104 to 195 (SQWR…QERH), and 199 to 297 (TSLQ…LYRN). The next 6 membrane-spanning stretches (helical) occupy residues 16–36 (LMCV…LEVV), 67–87 (FWKG…IHLA), 109–129 (IVAG…LEVV), 165–185 (GFSL…AVYI), 204–224 (FING…FETV), and 261–281 (VMAL…YFGL).

The protein belongs to the mitochondrial carrier (TC 2.A.29) family.

The protein localises to the mitochondrion inner membrane. The sequence is that of Solute carrier family 25 member 43 (slc25a43) from Danio rerio (Zebrafish).